Consider the following 169-residue polypeptide: NAD(P)H-quinone oxidoreductase subunit J, chloroplastic (169 aa).

It belongs to the complex I 30 kDa subunit family. As to quaternary structure, NDH is composed of at least 16 different subunits, 5 of which are encoded in the nucleus.

The protein resides in the plastid. It is found in the chloroplast thylakoid membrane. The enzyme catalyses a plastoquinone + NADH + (n+1) H(+)(in) = a plastoquinol + NAD(+) + n H(+)(out). It catalyses the reaction a plastoquinone + NADPH + (n+1) H(+)(in) = a plastoquinol + NADP(+) + n H(+)(out). Functionally, NDH shuttles electrons from NAD(P)H:plastoquinone, via FMN and iron-sulfur (Fe-S) centers, to quinones in the photosynthetic chain and possibly in a chloroplast respiratory chain. The immediate electron acceptor for the enzyme in this species is believed to be plastoquinone. Couples the redox reaction to proton translocation, and thus conserves the redox energy in a proton gradient. In Staurastrum punctulatum (Green alga), this protein is NAD(P)H-quinone oxidoreductase subunit J, chloroplastic.